The following is a 366-amino-acid chain: Polyprenyl transferase ausN (366 aa).

8 consecutive transmembrane segments (helical) span residues 97 to 117 (VVGI…DLLL), 121 to 141 (LLLT…NDLI), 164 to 184 (LPTA…LFLF), 215 to 235 (LILV…GVEP), 239 to 259 (ILSS…IDLV), 287 to 307 (LAYS…LLGG), 308 to 328 (LRAP…WTFL), and 346 to 366 (SCLM…AVRV).

The protein belongs to the UbiA prenyltransferase family. It depends on Mg(2+) as a cofactor.

It is found in the membrane. The enzyme catalyses 3,5-dimethylorsellinate + (2E,6E)-farnesyl diphosphate = (3R)-3-farnesyl-6-hydroxy-2,3,5-trimethyl-4-oxocyclohexa-1,5-diene-1-carboxylate + diphosphate + H(+). It participates in secondary metabolite biosynthesis; terpenoid biosynthesis. Polyprenyl transferase; part of the gene cluster that mediates the biosynthesis of calidodehydroaustin, a fungal meroterpenoid. The first step of the pathway is the synthesis of 3,5-dimethylorsellinic acid by the polyketide synthase ausA. 3,5-dimethylorsellinic acid is then prenylated by the polyprenyl transferase ausN. Further epoxidation by the FAD-dependent monooxygenase ausM and cyclization by the probable terpene cyclase ausL lead to the formation of protoaustinoid A. Protoaustinoid A is then oxidized to spiro-lactone preaustinoid A3 by the combined action of the FAD-binding monooxygenases ausB and ausC, and the dioxygenase ausE. Acid-catalyzed keto-rearrangement and ring contraction of the tetraketide portion of preaustinoid A3 by ausJ lead to the formation of preaustinoid A4. The aldo-keto reductase ausK, with the help of ausH, is involved in the next step by transforming preaustinoid A4 into isoaustinone which is in turn hydroxylated by the P450 monooxygenase ausI to form austinolide. The cytochrome P450 monooxygenase ausG modifies austinolide to austinol. Austinol is further acetylated to austin by the O-acetyltransferase ausP, which spontaneously changes to dehydroaustin. The cytochrome P450 monooxygenase ausR then converts dehydroaustin is into 7-dehydrodehydroaustin. The hydroxylation catalyzed by ausR permits the O-acetyltransferase ausQ to add an additional acetyl group to the molecule, leading to the formation of acetoxydehydroaustin. The short chain dehydrogenase ausT catalyzes the reduction of the double bond present between carbon atoms 1 and 2 to convert 7-dehydrodehydroaustin into 1,2-dihydro-7-hydroxydehydroaustin. AusQ catalyzes not only an acetylation reaction but also the addition of the PKS ausV diketide product to 1,2-dihydro-7-hydroxydehydroaustin, forming precalidodehydroaustin. Finally, the iron/alpha-ketoglutarate-dependent dioxygenase converts precalidodehydroaustin into calidodehydroaustin. The chain is Polyprenyl transferase ausN from Aspergillus calidoustus.